The following is a 216-amino-acid chain: Ras-related protein Rab-5C (216 aa).

GTP-binding residues include Ser30, Ala31, Gly33, Lys34, Ser35, Ser36, His47, Glu48, Thr53, and Gly79. Ser35 contributes to the Mg(2+) binding site. 2 consecutive short sequence motifs (switch) follow at residues 45–57 (QFHEYQESTIGAA) and 78–94 (AGQERYHSLAPMYYRGA). Thr53 serves as a coordination point for Mg(2+). At Ser85 the chain carries Phosphoserine. Residues Asn134, Lys135, Asp137, Ala165, and Lys166 each coordinate GTP. Residues 185 to 216 (NEPQNAAGAPGRTRGVDLQESNPASRSQCCSN) are disordered. A compositionally biased stretch (polar residues) spans 203–216 (QESNPASRSQCCSN). 2 S-geranylgeranyl cysteine lipidation sites follow: Cys213 and Cys214.

Belongs to the small GTPase superfamily. Rab family. Interacts with EEA1 and INCA1. Interacts with GDI1, GDI2, CHML and CHM; phosphorylation at Ser-85 disrupts this interaction. Mg(2+) serves as cofactor. Post-translationally, phosphorylation of Ser-85 in the switch II region by LRRK2 prevents the association of RAB regulatory proteins, including CHM, CHML and RAB GDP dissociation inhibitors GDI1 and GDI2.

The protein resides in the cell membrane. It localises to the early endosome membrane. Its subcellular location is the melanosome. The catalysed reaction is GTP + H2O = GDP + phosphate + H(+). Regulated by guanine nucleotide exchange factors (GEFs) which promote the exchange of bound GDP for free GTP. Regulated by GTPase activating proteins (GAPs) which increase the GTP hydrolysis activity. Inhibited by GDP dissociation inhibitors (GDIs). Functionally, the small GTPases Rab are key regulators of intracellular membrane trafficking, from the formation of transport vesicles to their fusion with membranes. Rabs cycle between an inactive GDP-bound form and an active GTP-bound form that is able to recruit to membranes different sets of downstream effectors directly responsible for vesicle formation, movement, tethering and fusion. In Mus musculus (Mouse), this protein is Ras-related protein Rab-5C.